A 459-amino-acid polypeptide reads, in one-letter code: MDQSNRYARLDLQEADLIAGGRHVLCAYVMKPKAGYGYLETAAHFAAESSTGTNVEVSTTDDFTRGVDALVYEIDPEKEIMKIAYPVELFDRNIIDGRAMLCSFLTLTIGNNQGMGDVEYAKMHDFYVPPCYLRLFDGPSMNIADMWRVLGRDVRNGGMVVGTIIKPKLGLRPKPFADACHEFWLGADFIKNDEPQGNQTFAPLKETIRLVADAMKRAQDETGEAKLFSANITADDHYEMVARGEYILETFGENADHVAFLVDGYVTGPAAITTARRQFPRQFLHYHRAGHGAVTSPQSMRGYTAFVLSKMARLQGASGIHTGTMGYGKMEGEAADKIMAYMLTDEAAEGPFYRQTGWGSKATTPIISGGMNALRLPGFFDNLGHSNVIQTSGGGAFGHLDGGTAGAKSLRQSHEAWMAGVDLVTYAREHRELARAFESFPADADKFYPGWRDRLHRAA.

Asn111 is a substrate binding site. Catalysis depends on Lys166, which acts as the Proton acceptor. Lys168 provides a ligand contact to substrate. Mg(2+) contacts are provided by Lys191, Asp193, and Glu194. Lys191 is subject to N6-carboxylysine. The active-site Proton acceptor is the His287. Residues Arg288, His321, and Ser368 each coordinate substrate.

The protein belongs to the RuBisCO large chain family. Type II subfamily. As to quaternary structure, homodimer. The cofactor is Mg(2+).

It carries out the reaction 2 (2R)-3-phosphoglycerate + 2 H(+) = D-ribulose 1,5-bisphosphate + CO2 + H2O. The enzyme catalyses D-ribulose 1,5-bisphosphate + O2 = 2-phosphoglycolate + (2R)-3-phosphoglycerate + 2 H(+). Its function is as follows. RuBisCO catalyzes two reactions: the carboxylation of D-ribulose 1,5-bisphosphate, the primary event in carbon dioxide fixation, as well as the oxidative fragmentation of the pentose substrate. Both reactions occur simultaneously and in competition at the same active site. This Cereibacter sphaeroides (Rhodobacter sphaeroides) protein is Ribulose bisphosphate carboxylase.